The following is a 274-amino-acid chain: Aliphatic sulfonates import ATP-binding protein SsuB 2 (274 aa).

Positions 21-242 constitute an ABC transporter domain; sequence LALRGVARRF…SRGSARLAAL (222 aa). 53-60 contacts ATP; it reads GRSGCGKS.

This sequence belongs to the ABC transporter superfamily. Aliphatic sulfonates importer (TC 3.A.1.17.2) family. As to quaternary structure, the complex is composed of two ATP-binding proteins (SsuB), two transmembrane proteins (SsuC) and a solute-binding protein (SsuA).

Its subcellular location is the cell inner membrane. The enzyme catalyses ATP + H2O + aliphatic sulfonate-[sulfonate-binding protein]Side 1 = ADP + phosphate + aliphatic sulfonateSide 2 + [sulfonate-binding protein]Side 1.. Its function is as follows. Part of the ABC transporter complex SsuABC involved in aliphatic sulfonates import. Responsible for energy coupling to the transport system. The chain is Aliphatic sulfonates import ATP-binding protein SsuB 2 from Pseudomonas aeruginosa (strain UCBPP-PA14).